We begin with the raw amino-acid sequence, 59 residues long: UPF0434 protein Sbal_1685 (59 aa).

Belongs to the UPF0434 family.

In Shewanella baltica (strain OS155 / ATCC BAA-1091), this protein is UPF0434 protein Sbal_1685.